The sequence spans 293 residues: Protease HtpX homolog (293 aa).

Helical transmembrane passes span 4-24 (IFLF…TMRI) and 38-58 (LTGL…ISLL). H146 is a binding site for Zn(2+). E147 is a catalytic residue. H150 contributes to the Zn(2+) binding site. 2 helical membrane passes run 161–181 (LIQG…GYFV) and 198–218 (ATVI…VAWF). Zn(2+) is bound at residue E223.

Belongs to the peptidase M48B family. Zn(2+) serves as cofactor.

It is found in the cell inner membrane. This chain is Protease HtpX homolog, found in Bordetella parapertussis (strain 12822 / ATCC BAA-587 / NCTC 13253).